The primary structure comprises 1396 residues: DNA ligase 6 (1396 aa).

Disordered regions lie at residues 441–464 and 562–599; these read KNAC…DTTP and MNLT…GPGQ. 2 consecutive short sequence motifs (nuclear localization signal) follow at residues 572-579 and 886-893; these read GKRGKSSG and LRKISVQT. Glu1037 contacts ATP. Lys1039 (N6-AMP-lysine intermediate) is an active-site residue. Arg1044, Arg1060, Glu1092, and Phe1136 together coordinate ATP. Glu1092 is a binding site for Mg(2+). Glu1207 contributes to the Mg(2+) binding site. 3 residues coordinate ATP: Lys1212, Arg1225, and Lys1231.

This sequence belongs to the ATP-dependent DNA ligase family. The cofactor is Mg(2+). In terms of tissue distribution, mostly expressed in buds and flowers, and, to a lower extent, in stems, leaves, siliques and seeds.

The protein localises to the nucleus. It carries out the reaction ATP + (deoxyribonucleotide)n-3'-hydroxyl + 5'-phospho-(deoxyribonucleotide)m = (deoxyribonucleotide)n+m + AMP + diphosphate.. DNA ligase that seals nicks in double-stranded DNA during DNA replication, DNA recombination and DNA repair. Required to maintain seed viability (e.g. longevity and storability) and during seed germination, probably by repairing DNA damage accumulated during seed development, storage and/or imbibition. Facilitates seed germination in cold conditions (2 degrees Celsius) and under oxidative stress (e.g. menadione, a genotoxic agent). Involved in repair of X-ray-induced damage. Functionally, limits stable root transformation by A.tumefaciens T-DNA. The sequence is that of DNA ligase 6 from Arabidopsis thaliana (Mouse-ear cress).